The chain runs to 512 residues: Sodium/proline symporter (512 aa).

Transmembrane regions (helical) follow at residues 16 to 36, 54 to 74, 85 to 105, 139 to 159, 174 to 194, 200 to 220, 240 to 260, 286 to 306, 327 to 347, 381 to 401, 410 to 430, 438 to 458, and 467 to 487; these read WQTY…GFYG, IGPY…WMIM, LSAM…YFVV, IISG…GFVS, FGLI…GYLA, FFQG…AMMN, LFKG…LGYF, ISWM…GIAF, VLFH…AIMS, FVMI…AIAW, LVGN…LFAL, AGAV…IAWI, and IFGL…TYVV.

This sequence belongs to the sodium:solute symporter (SSF) (TC 2.A.21) family.

It localises to the cell membrane. The enzyme catalyses L-proline(in) + Na(+)(in) = L-proline(out) + Na(+)(out). Its function is as follows. Catalyzes the sodium-dependent uptake of extracellular L-proline. Since most S.aureus strains are L-proline auxotrophs, this transporter may aid the bacterial persistence during an infection of tissues with low proline concentrations. In Staphylococcus aureus (strain bovine RF122 / ET3-1), this protein is Sodium/proline symporter (putP).